Reading from the N-terminus, the 723-residue chain is Preterminal protein (723 aa).

A Nuclear localization signal motif is present at residues 453 to 462 (RLPMRRRRRR). The tract at residues 457–492 (RRRRRRAPPPPPMSEELSEPEVEAFPPASPPRRSFE) is disordered. Ser651 carries the post-translational modification O-(5'-phospho-DNA)-serine.

This sequence belongs to the adenoviridae terminal protein family. As to quaternary structure, heterodimer with the polymerase; this heterodimer binds to bp 9 to 18 of the genome. Interacts with host POU2F1; POU2F1 binds to the auxiliary sequences in the inverted terminal repeats and tethers the pTP-POL heterodimer to the origin DNA thereby participating in the assembly of the pre-initiation complex (POL-TP-DBP-NFIA-POU2F1). Post-translationally, preterminal protein is used to replicate viral genome, upon genomic encapsidation it is processed first into iTP and finally into TP by adenovirus protease.

It localises to the host nucleus matrix. Protein covalently bound to the viral DNA that acts as a primer for viral genomic replication by DNA strand displacement. Assembles on the viral origin of replication in an initiation complex with viral polymerase, DBP, host NFIA and host POU2F1/OCT1. During initiation, the polymerase covalently couples the first dCTP with Ser-580 of pTP. The terminal protein stimulates the template activity over 20 fold compared to protein-free templates. Neo-synthesized viral genomes are linked to two preterminal proteins, one for each 5' end. These new genomes are encapsidated in the nucleus, and during capsid maturation by viral protease, preterminal protein is first cleaved into intermediary (iTP), then into mature TP. May play a role in host nuclear matrix localization of genomic DNA. This is Preterminal protein from Canis lupus familiaris (Dog).